We begin with the raw amino-acid sequence, 351 residues long: Peptide chain release factor 1 (351 aa).

The residue at position 233 (glutamine 233) is an N5-methylglutamine.

Belongs to the prokaryotic/mitochondrial release factor family. In terms of processing, methylated by PrmC. Methylation increases the termination efficiency of RF1.

It localises to the cytoplasm. Its function is as follows. Peptide chain release factor 1 directs the termination of translation in response to the peptide chain termination codons UAG and UAA. The polypeptide is Peptide chain release factor 1 (Treponema pallidum subsp. pallidum (strain SS14)).